Consider the following 107-residue polypeptide: Putative double-stranded DNA mimic protein HSM_1473 (107 aa).

The protein belongs to the putative dsDNA mimic protein family.

In terms of biological role, may act as a double-stranded DNA (dsDNA) mimic. Probably regulates the activity of a dsDNA-binding protein. The protein is Putative double-stranded DNA mimic protein HSM_1473 of Histophilus somni (strain 2336) (Haemophilus somnus).